We begin with the raw amino-acid sequence, 954 residues long: Mycolic acid-containing lipids exporter MmpL11 (954 aa).

Transmembrane regions (helical) follow at residues 11 to 31 (FRWAVFATWLLLLVPSIYLAL), 188 to 208 (IVLIVLLAVFGSLAAAALPLV), 214 to 234 (VVVTMGLVYLLSMFTTMSVFV), 235 to 255 (TSTVSMFGIAVAIDYSLFILM), 279 to 299 (GLAVALSGLTVIASVTGIYLI), 312 to 334 (ILAVAVAVLTSTTLTPAVLATFG), 373 to 393 (AIAAAILLLVLAAPAFNMVLG), 529 to 549 (TQPLVFVFVALIAFVMLLVSI), 559 to 579 (VLMTVLSVAAAYGSLVVVFQW), 597 to 617 (IPPLVLAMTFGLSMDYEIFLL), 648 to 668 (AALIMIAVFIGFAFAGMPLVA), and 670 to 690 (LGVACAVAIAVDATVVRLVLV).

Its subcellular location is the cell inner membrane. In terms of biological role, contributes to cell wall biosynthesis and biofilm formation. Transports the mycolic acid-containing lipids monomeromycolyl diacylglycerol (MMDAG) and mycolate ester wax (WE) to the bacterial surface. The sequence is that of Mycolic acid-containing lipids exporter MmpL11 from Mycolicibacterium smegmatis (strain ATCC 700084 / mc(2)155) (Mycobacterium smegmatis).